A 110-amino-acid polypeptide reads, in one-letter code: FMRFamide-like neuropeptides 11 (110 aa).

An N-terminal signal peptide occupies residues 1–22 (MTQFSALALLLIVFVAASFAQS). A propeptide spanning residues 23-29 (YDDVSAE) is cleaved from the precursor. 2 positions are modified to phenylalanine amide: Phe40 and Phe54. The segment at 60 to 85 (LDEEDFAPESPLQGKRNGAPQPFVRF) is disordered. Gln72 is subject to Glutamine amide. Phe85 is subject to Phenylalanine amide. Positions 88-110 (SGQLDHMHDLLSTLQKLKFANNK) are excised as a propeptide.

This sequence belongs to the FARP (FMRFamide related peptide) family. In terms of tissue distribution, each flp gene is expressed in a distinct set of neurons. Flp-11 is expressed in the DD, VD and DVB motor neurons, the PVC and URX interneurons, and the AUA, BAG, DA, LUA, and SAB neurons. Also expressed in head muscle, socket or sheath cells and uterine cells. Expressed exclusively in PHC sensory neurons in males. Expressed in AVK and RIS interneurons.

It localises to the secreted. FMRFamides and FMRFamide-like peptides are neuropeptides. Induces sleep-like quiescence behavior following release from RIS interneuron. Helps to sustain locomotion stop after gamma-aminobutyric acid (GABA) induces fast slowing response. Inhibits the late-stage body bend swimming frequency in animals through several receptors including frpr-3, npr-4 and npr-22. Its function is as follows. Potent inhibitor of the activity of the dissected pharyngeal myogenic muscle system. Acts as a ligand for the npr-22 receptor in vitro. In terms of biological role, acts as a ligand for the npr-22 receptor in vitro. The protein is FMRFamide-like neuropeptides 11 of Caenorhabditis elegans.